The primary structure comprises 736 residues: Prospero homeobox protein 1 (736 aa).

Polar residues predominate over residues 103–135 (KNGGTEPSFQASGLSSTGSEVHQEDVCSNSSRD). The disordered stretch occupies residues 103-146 (KNGGTEPSFQASGLSSTGSEVHQEDVCSNSSRDSPQECLSPFGR). The Nuclear localization signal signature appears at 163–168 (RAKRAR). Disordered regions lie at residues 180-220 (PRVA…QQQS), 261-301 (YDST…EMCE), 319-344 (EIGE…HPEG), 445-465 (NSSD…SLHQ), and 499-518 (PSAS…DLTR). A compositionally biased stretch (acidic residues) spans 264–274 (TDSENDEDGNL). The segment covering 319–335 (EIGENKPKREGPKEKDQ) has biased composition (basic and acidic residues). A compositionally biased stretch (low complexity) spans 450–460 (PASAPPAGGHH). Residues 505–518 (GKERASPESLDLTR) show a composition bias toward basic and acidic residues. The 59-residue stretch at 576–634 (QEGLSPNHLKKAKLMFFYTRYPSSNMLKTYFSDVKFNRCITSQLIKWFSNFREFYYIQM) folds into the Prospero-type homeo domain. The interval 576–734 (QEGLSPNHLK…KSPNCLQELL (159 aa)) is homeo-Prospero. Residues 635-734 (EKYARQAIND…KSPNCLQELL (100 aa)) enclose the Prospero domain.

This sequence belongs to the Prospero homeodomain family. As to expression, expressed most actively in the developing lens and midgut and at lower levels in the developing brain, heart, muscle and retina.

The protein resides in the nucleus. Its function is as follows. Transcription factor which may be involved in developmental processes such as cell fate determination, gene transcriptional regulation and progenitor cell regulation in a number of organs. May be essential in the development and function of the eye. May play a role in the regulation of the circadian rhythm by repressing the expression of clock genes. The sequence is that of Prospero homeobox protein 1 (PROX1) from Gallus gallus (Chicken).